A 365-amino-acid chain; its full sequence is N5-carboxyaminoimidazole ribonucleotide synthase (365 aa).

Residues Arg-102, Lys-143, 148 to 154, 177 to 180, Glu-185, and 256 to 257 each bind ATP; these read GYDGKGQ, EEYV, and NE. In terms of domain architecture, ATP-grasp spans 106–286; it reads KLFYRQHNLP…QFEQHLRAII (181 aa).

Belongs to the PurK/PurT family. Homodimer.

It carries out the reaction 5-amino-1-(5-phospho-beta-D-ribosyl)imidazole + hydrogencarbonate + ATP = 5-carboxyamino-1-(5-phospho-D-ribosyl)imidazole + ADP + phosphate + 2 H(+). Its pathway is purine metabolism; IMP biosynthesis via de novo pathway; 5-amino-1-(5-phospho-D-ribosyl)imidazole-4-carboxylate from 5-amino-1-(5-phospho-D-ribosyl)imidazole (N5-CAIR route): step 1/2. Catalyzes the ATP-dependent conversion of 5-aminoimidazole ribonucleotide (AIR) and HCO(3)(-) to N5-carboxyaminoimidazole ribonucleotide (N5-CAIR). This chain is N5-carboxyaminoimidazole ribonucleotide synthase, found in Saccharolobus solfataricus (strain ATCC 35092 / DSM 1617 / JCM 11322 / P2) (Sulfolobus solfataricus).